A 298-amino-acid chain; its full sequence is Tyrosine recombinase XerC (298 aa).

The Core-binding (CB) domain maps to 2 to 88; that stretch reads TDLHTDVERY…ALRSFFDWLV (87 aa). Positions 109 to 288 constitute a Tyr recombinase domain; the sequence is HLPKNIDVDD…DFQHLASVYD (180 aa). Catalysis depends on residues Arg148, Lys172, His240, Arg243, and His266. Tyr275 functions as the O-(3'-phospho-DNA)-tyrosine intermediate in the catalytic mechanism.

This sequence belongs to the 'phage' integrase family. XerC subfamily. In terms of assembly, forms a cyclic heterotetrameric complex composed of two molecules of XerC and two molecules of XerD, in which XerC interacts with XerD via its C-terminal region, XerD interacts with XerC via its C-terminal region and so on.

It is found in the cytoplasm. Its activity is regulated as follows. FtsK may regulate the catalytic switch between XerC and XerD in the heterotetrameric complex during the two steps of the recombination process. Site-specific tyrosine recombinase, which acts by catalyzing the cutting and rejoining of the recombining DNA molecules. Binds cooperatively to specific DNA consensus sequences that are separated from XerD binding sites by a short central region, forming the heterotetrameric XerC-XerD complex that recombines DNA substrates. The complex is essential to convert dimers of the bacterial chromosome into monomers to permit their segregation at cell division. It also contributes to the segregational stability of plasmids. In the complex XerC specifically exchanges the top DNA strands. The polypeptide is Tyrosine recombinase XerC (Escherichia coli (strain 55989 / EAEC)).